A 196-amino-acid polypeptide reads, in one-letter code: MTATISLATLFGEARSQNGWLDRDVPDARLREIYDQMKFGPTSVNCSPARIVFVRSMEAKQKLAGAVAPANVDKVMNAPVVAIVGYDTRFYDRLPELFPHNPAVKSWFEGPEKAAFAETTAFRNGTLQGAYLIMAARAVGLDCGPMSGFNNAAVDAAFFAGTTIRSNFICGLGHGDPGRVFPRSPRLAFEQACTLA.

The protein belongs to the nitroreductase family. HadB/RutE subfamily. FMN is required as a cofactor.

The sequence is that of Putative NADH dehydrogenase/NAD(P)H nitroreductase HadB (hadB) from Ralstonia pickettii (Burkholderia pickettii).